A 668-amino-acid polypeptide reads, in one-letter code: MDKETAKQRAEELRRTINKYSYEYYTLDEPSVPDAEYDRLMQELIAIEEEHPDLRTPDSPTQRVGGAVLEAFQKVTHGTPMLSLGNAFNADDLRDFDRRVRQSVGDDVAYNVELKIDGLAVSLRYEDGYFVRGATRGDGTTGEDITENLKTIRNIPLKMNRELSIEVRGEAYMPKRSFEALNEERIKNEEEPFANPRNAAAGSLRQLDPKIAAKRNLDIFVYSIAELDEMGVETQSQGLDFLDELGFKTNQERKKCGSIEEVITLIDELQAKRADLPYEIDGIVIKVDSLDQQEELGFTAKSPRWAIAYKFPAEEVVTKLLDIELNVGRTGVITPTAILEPVKVAGTTVSRASLHNEDLIKEKDIRILDKVVVKKAGDIIPEVVNVLVDQRTGEEKEFSMPTECPECGSELVRIEGEVALRCINPECPAQIREGLIHFVSRNAMNIDGLGERVITQLFEENLVRNVADLYKLTKERVIQLERMGEKSTENLISSIQKSKENSLERLLFGLGIRFIGSKAAKTLAMHFESLENLKKASKEELLAVDEIGEKMADAVITYFHKEEMLELLNELQELGVNTLYKGPKKVKAEDSDSYFAGKTIVLTGKLEELSRNEAKAQIEALGGKLTGSVSKNTDLVIAGEAAGSKLTKAQELNIEVWNEEQLMGELKK.

Residues 34 to 38 (DAEYD), 83 to 84 (SL), and Glu-113 contribute to the NAD(+) site. The active-site N6-AMP-lysine intermediate is the Lys-115. NAD(+)-binding residues include Arg-136, Glu-170, Lys-286, and Lys-310. Residues Cys-404, Cys-407, Cys-422, and Cys-427 each coordinate Zn(2+). A BRCT domain is found at 590–668 (DSDSYFAGKT…EEQLMGELKK (79 aa)).

The protein belongs to the NAD-dependent DNA ligase family. LigA subfamily. Mg(2+) is required as a cofactor. It depends on Mn(2+) as a cofactor.

The catalysed reaction is NAD(+) + (deoxyribonucleotide)n-3'-hydroxyl + 5'-phospho-(deoxyribonucleotide)m = (deoxyribonucleotide)n+m + AMP + beta-nicotinamide D-nucleotide.. In terms of biological role, DNA ligase that catalyzes the formation of phosphodiester linkages between 5'-phosphoryl and 3'-hydroxyl groups in double-stranded DNA using NAD as a coenzyme and as the energy source for the reaction. It is essential for DNA replication and repair of damaged DNA. The polypeptide is DNA ligase (Bacillus subtilis (strain 168)).